Consider the following 346-residue polypeptide: Protein RecA (346 aa).

An ATP-binding site is contributed by 65–72 (GPESSGKT).

The protein belongs to the RecA family.

It localises to the cytoplasm. In terms of biological role, can catalyze the hydrolysis of ATP in the presence of single-stranded DNA, the ATP-dependent uptake of single-stranded DNA by duplex DNA, and the ATP-dependent hybridization of homologous single-stranded DNAs. It interacts with LexA causing its activation and leading to its autocatalytic cleavage. This Enterococcus mundtii protein is Protein RecA.